The sequence spans 273 residues: uncharacterized protein (273 aa).

Residues 29–131 enclose the AB hydrolase-1 domain; the sequence is TLVCVHGFLS…VVLLCSSGYL (103 aa). Active-site residues include serine 102 and histidine 254.

Belongs to the DmpD/TodF/XylF esterase family.

This is an uncharacterized protein from Bacillus subtilis (strain 168).